The following is a 205-amino-acid chain: Pyridoxal 5'-phosphate synthase subunit PdxT (205 aa).

52–54 (GES) contributes to the L-glutamine binding site. Cysteine 84 serves as the catalytic Nucleophile. L-glutamine is bound by residues arginine 116 and 145–146 (IR). Active-site charge relay system residues include histidine 185 and glutamate 187.

It belongs to the glutaminase PdxT/SNO family. As to quaternary structure, in the presence of PdxS, forms a dodecamer of heterodimers. Only shows activity in the heterodimer.

It carries out the reaction aldehydo-D-ribose 5-phosphate + D-glyceraldehyde 3-phosphate + L-glutamine = pyridoxal 5'-phosphate + L-glutamate + phosphate + 3 H2O + H(+). The enzyme catalyses L-glutamine + H2O = L-glutamate + NH4(+). It participates in cofactor biosynthesis; pyridoxal 5'-phosphate biosynthesis. In terms of biological role, catalyzes the hydrolysis of glutamine to glutamate and ammonia as part of the biosynthesis of pyridoxal 5'-phosphate. The resulting ammonia molecule is channeled to the active site of PdxS. The chain is Pyridoxal 5'-phosphate synthase subunit PdxT from Staphylothermus marinus (strain ATCC 43588 / DSM 3639 / JCM 9404 / F1).